We begin with the raw amino-acid sequence, 417 residues long: Serine hydroxymethyltransferase 1 (417 aa).

(6S)-5,6,7,8-tetrahydrofolate is bound by residues L121 and 125–127 (GHL). K229 bears the N6-(pyridoxal phosphate)lysine mark. 354–356 (SPF) provides a ligand contact to (6S)-5,6,7,8-tetrahydrofolate.

The protein belongs to the SHMT family. Homodimer. It depends on pyridoxal 5'-phosphate as a cofactor.

The protein localises to the cytoplasm. It catalyses the reaction (6R)-5,10-methylene-5,6,7,8-tetrahydrofolate + glycine + H2O = (6S)-5,6,7,8-tetrahydrofolate + L-serine. It participates in one-carbon metabolism; tetrahydrofolate interconversion. Its pathway is amino-acid biosynthesis; glycine biosynthesis; glycine from L-serine: step 1/1. Functionally, catalyzes the reversible interconversion of serine and glycine with tetrahydrofolate (THF) serving as the one-carbon carrier. This reaction serves as the major source of one-carbon groups required for the biosynthesis of purines, thymidylate, methionine, and other important biomolecules. Also exhibits THF-independent aldolase activity toward beta-hydroxyamino acids, producing glycine and aldehydes, via a retro-aldol mechanism. In Pseudomonas syringae pv. syringae (strain B728a), this protein is Serine hydroxymethyltransferase 1.